Here is a 607-residue protein sequence, read N- to C-terminus: Autophagy-related protein 22-2 (607 aa).

Residues 9-31 (FQSPSPDEGVQQRPPRYVGEDTT) form a disordered region. Residues 44-64 (YGIAAEVFAVCGVGSFLPLTL) traverse the membrane as a helical segment. Asn88 and Asn91 each carry an N-linked (GlcNAc...) asparagine glycan. The next 3 membrane-spanning stretches (helical) occupy residues 111–131 (SFAM…LISF), 143–160 (TLLM…MLFV), and 161–178 (FIAP…VVGV). The segment at 203 to 263 (QEGKADDGTE…GMGTKAPLSS (61 aa)) is disordered. N-linked (GlcNAc...) asparagine glycosylation is present at Asn235. A run of 8 helical transmembrane segments spans residues 277–297 (GIGL…IMLL), 310–330 (TLPM…FTLV), 381–401 (VLIF…VSGT), 415–435 (PLIG…AFLW), 450–470 (IILC…AYIP), 484–504 (WEIF…ASYC), 521–543 (YALY…GGIV), and 552–572 (GFFF…MVNA). The segment at 585-607 (TLGKSHGGPAEDAQEAEGLLARE) is disordered.

This sequence belongs to the ATG22 family.

Its subcellular location is the vacuole membrane. Functionally, vacuolar effluxer which mediate the efflux of amino acids resulting from autophagic degradation. The release of autophagic amino acids allows the maintenance of protein synthesis and viability during nitrogen starvation. This chain is Autophagy-related protein 22-2 (atg22-2), found in Penicillium rubens (strain ATCC 28089 / DSM 1075 / NRRL 1951 / Wisconsin 54-1255) (Penicillium chrysogenum).